The chain runs to 410 residues: Na(+)-translocating NADH-quinone reductase subunit B (410 aa).

Transmembrane regions (helical) follow at residues 56–76 (MMIL…YNVG), 119–139 (LFGA…GGFW), and 159–179 (SILF…ALGI). Thr232 bears the FMN phosphoryl threonine mark. 5 helical membrane passes run 266–286 (GSIG…IVFA), 293–313 (IIAG…FIGS), 318–338 (MFAM…GMLF), 347–367 (SFTN…CVLI), and 377–397 (GMML…YFVA).

It belongs to the NqrB/RnfD family. In terms of assembly, composed of six subunits; NqrA, NqrB, NqrC, NqrD, NqrE and NqrF. The cofactor is FMN.

Its subcellular location is the cell inner membrane. It catalyses the reaction a ubiquinone + n Na(+)(in) + NADH + H(+) = a ubiquinol + n Na(+)(out) + NAD(+). Functionally, NQR complex catalyzes the reduction of ubiquinone-1 to ubiquinol by two successive reactions, coupled with the transport of Na(+) ions from the cytoplasm to the periplasm. NqrA to NqrE are probably involved in the second step, the conversion of ubisemiquinone to ubiquinol. This Neisseria meningitidis serogroup A / serotype 4A (strain DSM 15465 / Z2491) protein is Na(+)-translocating NADH-quinone reductase subunit B.